The chain runs to 334 residues: N-acetyl-gamma-glutamyl-phosphate reductase (334 aa).

The active site involves cysteine 154.

This sequence belongs to the NAGSA dehydrogenase family. Type 1 subfamily.

The protein localises to the cytoplasm. The catalysed reaction is N-acetyl-L-glutamate 5-semialdehyde + phosphate + NADP(+) = N-acetyl-L-glutamyl 5-phosphate + NADPH + H(+). Its pathway is amino-acid biosynthesis; L-arginine biosynthesis; N(2)-acetyl-L-ornithine from L-glutamate: step 3/4. Functionally, catalyzes the NADPH-dependent reduction of N-acetyl-5-glutamyl phosphate to yield N-acetyl-L-glutamate 5-semialdehyde. The sequence is that of N-acetyl-gamma-glutamyl-phosphate reductase from Yersinia pestis.